A 492-amino-acid polypeptide reads, in one-letter code: MDPYKHRPSSSFNGPLWSTNSGAPVWNNNNSLTVGSRGPILLEDYHLVEKLANFDRERIPERVVHARGASAKGFFEVTHDITHLTCADFLRAPGVQTPVIVRFSTVIHERGSPETLRDPRGFAIKFYTREGNWDLVGNNFPVFFIRDGMKFPDMVHSLKPNPKSHVQENWRILDFFSHHPESLHMFTFLFDDIGIPADYRHMDGSGVNTYTLVNRAGKSHYVKFHWKPTCGVKSLLDDEAVTVGGTNHSHATQDLYDSIAAGNFPEWKLFIQTIDPDHEDRFDFDPLDVTKTWPEDIVPLQPVGRMVLNRNIDNFFSENEQLAFCPGIIVPGIYYSDDKLLQTRIFSYSDTQRHRLGPNYLLLPPNAPKCAHHNNHYDGFMNFMHRDEEVDYFPSRYDPAKHAPRYPIPSATLTGRREKVVIAKENNFKQPGERYRSWDPARQDRFIKRWIDALSDPRLTHEIRSIWLSYWSQADRSLGQKLASRLSAKPSM.

Residue arginine 62 participates in heme binding. The active site involves histidine 65. Arginine 102 serves as a coordination point for heme. The active site involves asparagine 138. A heme-binding site is contributed by phenylalanine 151. Tyrosine 210 is modified (phosphotyrosine; by STRK1). The 3-(S-cysteinyl)-tyrosine (Cys-Tyr) cross-link spans 325–348 (CPGIIVPGIYYSDDKLLQTRIFSY). Positions 344, 348, and 355 each coordinate heme. The short motif at 484 to 492 (SRLSAKPSM) is the Peroxisome targeting signal element.

The protein belongs to the catalase family. In terms of assembly, homotetramer. Interacts with GLO1 and GLO4; these interactions are disturbed by alpha-hydroxy-2-pyridinemethanesulfonic acid (HPMS) and salicylic acid (SA). Interacts with STRK1 at the plasma membrane. Heme serves as cofactor. Activated by STRK1-mediated phosphorylation at Tyr-210 upon salt and oxidative stress. As to expression, highly expressed in mature leaves. Mainly expressed in leaf blades, stems, panicles, leaf sheaths, and culms, but barely in roots.

Its subcellular location is the peroxisome. It localises to the glyoxysome. The protein resides in the cell membrane. It carries out the reaction 2 H2O2 = O2 + 2 H2O. With respect to regulation, strongly inhibited by beta-mercaptoethanol, sodium azide and potassium cyanide. Slightly repressed by 3-amino-1,2,4-triazole (3-AT). Activity is repressed proportionally to increased concentration of NaCl, KCl, LiCl and MgCl(2). Occurs in almost all aerobically respiring organisms and serves to protect cells from the toxic effects of hydrogen peroxide. Responsible for the redox homeostasis in leaves. Prevents nitric oxide (NO) accumulation and subsequent NO-mediated leaf cell death as well as the S-nitrosylation of specific proteins (e.g. glyceraldehyde 3-phosphate dehydrogenase and thioredoxin) by degrading H(2)O(2). Involved in photorespiration. Promotes drought stress tolerance and recovery. Involved in NO-mediated enhanced tolerance to zinc oxide nanoparticles (ZnO NPs)-induced phytotoxicity. Participates in melatonin-mediated detoxification. The protein is Catalase isozyme C of Oryza sativa subsp. japonica (Rice).